Consider the following 42-residue polypeptide: Photosystem II reaction center protein J (42 aa).

A helical membrane pass occupies residues 10-30; that stretch reads IPLWLVGTVVGIAALTLLSVF.

The protein belongs to the PsbJ family. PSII is composed of 1 copy each of membrane proteins PsbA, PsbB, PsbC, PsbD, PsbE, PsbF, PsbH, PsbI, PsbJ, PsbK, PsbL, PsbM, PsbT, PsbX, PsbY, PsbZ, Psb30/Ycf12, at least 3 peripheral proteins of the oxygen-evolving complex and a large number of cofactors. It forms dimeric complexes.

Its subcellular location is the plastid. It is found in the chloroplast thylakoid membrane. In terms of biological role, one of the components of the core complex of photosystem II (PSII). PSII is a light-driven water:plastoquinone oxidoreductase that uses light energy to abstract electrons from H(2)O, generating O(2) and a proton gradient subsequently used for ATP formation. It consists of a core antenna complex that captures photons, and an electron transfer chain that converts photonic excitation into a charge separation. The protein is Photosystem II reaction center protein J of Tupiella akineta (Green alga).